The chain runs to 200 residues: Protein GrpE (200 aa).

A compositionally biased stretch (basic and acidic residues) spans 1–10 (MQEKDSKDVT). The interval 1–57 (MQEKDSKDVTMEDEETIASQEEIEVEGNSEESSKEEESNNSEISDENLSEENLKLKD) is disordered. The segment covering 11-29 (MEDEETIASQEEIEVEGNS) has biased composition (acidic residues).

The protein belongs to the GrpE family. Homodimer.

The protein localises to the cytoplasm. In terms of biological role, participates actively in the response to hyperosmotic and heat shock by preventing the aggregation of stress-denatured proteins, in association with DnaK and GrpE. It is the nucleotide exchange factor for DnaK and may function as a thermosensor. Unfolded proteins bind initially to DnaJ; upon interaction with the DnaJ-bound protein, DnaK hydrolyzes its bound ATP, resulting in the formation of a stable complex. GrpE releases ADP from DnaK; ATP binding to DnaK triggers the release of the substrate protein, thus completing the reaction cycle. Several rounds of ATP-dependent interactions between DnaJ, DnaK and GrpE are required for fully efficient folding. The sequence is that of Protein GrpE from Clostridium acetobutylicum (strain ATCC 824 / DSM 792 / JCM 1419 / IAM 19013 / LMG 5710 / NBRC 13948 / NRRL B-527 / VKM B-1787 / 2291 / W).